The sequence spans 362 residues: Cytoskeleton protein RodZ (362 aa).

The Cytoplasmic portion of the chain corresponds to 1–111 (MNTEASQDQT…LGKKHKKRDG (111 aa)). An HTH cro/C1-type domain is found at 19-79 (LRQARESLGL…KLVHLPEDEL (61 aa)). The segment at residues 30 to 49 (QQTVAERLCLKVSTIRDIEE) is a DNA-binding region (H-T-H motif). Residues 112–132 (WLMSFTWLIVLVVLGLTGAWW) traverse the membrane as a helical; Signal-anchor for type II membrane protein segment. The Periplasmic portion of the chain corresponds to 133–362 (WQNHQAQQAE…RVARLTVGVE (230 aa)). Positions 151 to 277 (SAQLSQNGGQ…LPTADAGVSG (127 aa)) are disordered. Low complexity predominate over residues 193–221 (STSAVTNSATTSSATTSSVPTTSSVPKTT). Residues 223 to 242 (VPKTNSTEPVDTANTNTTMH) show a composition bias toward polar residues. Over residues 246 to 259 (AASAAVSPSQVPQP) the composition is skewed to low complexity.

Belongs to the RodZ family.

It is found in the cell inner membrane. In terms of biological role, cytoskeletal protein that is involved in cell-shape control through regulation of the length of the long axis. The sequence is that of Cytoskeleton protein RodZ from Yersinia pseudotuberculosis serotype IB (strain PB1/+).